The primary structure comprises 241 residues: Phosphoribosylaminoimidazole-succinocarboxamide synthase (241 aa).

It belongs to the SAICAR synthetase family.

The catalysed reaction is 5-amino-1-(5-phospho-D-ribosyl)imidazole-4-carboxylate + L-aspartate + ATP = (2S)-2-[5-amino-1-(5-phospho-beta-D-ribosyl)imidazole-4-carboxamido]succinate + ADP + phosphate + 2 H(+). It functions in the pathway purine metabolism; IMP biosynthesis via de novo pathway; 5-amino-1-(5-phospho-D-ribosyl)imidazole-4-carboxamide from 5-amino-1-(5-phospho-D-ribosyl)imidazole-4-carboxylate: step 1/2. This is Phosphoribosylaminoimidazole-succinocarboxamide synthase from Deinococcus geothermalis (strain DSM 11300 / CIP 105573 / AG-3a).